Here is a 38-residue protein sequence, read N- to C-terminus: Putative ORF10 protein (38 aa).

As to quaternary structure, binds host ZYG11B. This would not play any role in SARS-CoV-2 infection.

This is Putative ORF10 protein from Severe acute respiratory syndrome coronavirus 2 (2019-nCoV).